Here is a 269-residue protein sequence, read N- to C-terminus: Formamidopyrimidine-DNA glycosylase (269 aa).

The active-site Schiff-base intermediate with DNA is the proline 2. Residue glutamate 3 is the Proton donor of the active site. Catalysis depends on lysine 57, which acts as the Proton donor; for beta-elimination activity. 3 residues coordinate DNA: histidine 90, arginine 109, and lysine 150. An FPG-type zinc finger spans residues 235-269; that stretch reads QVYGKGGKPCPRCDNPLSEMKIGQRASVFCSECQK. The active-site Proton donor; for delta-elimination activity is arginine 259.

Belongs to the FPG family. As to quaternary structure, monomer. Zn(2+) serves as cofactor.

The catalysed reaction is Hydrolysis of DNA containing ring-opened 7-methylguanine residues, releasing 2,6-diamino-4-hydroxy-5-(N-methyl)formamidopyrimidine.. It catalyses the reaction 2'-deoxyribonucleotide-(2'-deoxyribose 5'-phosphate)-2'-deoxyribonucleotide-DNA = a 3'-end 2'-deoxyribonucleotide-(2,3-dehydro-2,3-deoxyribose 5'-phosphate)-DNA + a 5'-end 5'-phospho-2'-deoxyribonucleoside-DNA + H(+). Involved in base excision repair of DNA damaged by oxidation or by mutagenic agents. Acts as a DNA glycosylase that recognizes and removes damaged bases. Has a preference for oxidized purines, such as 7,8-dihydro-8-oxoguanine (8-oxoG). Has AP (apurinic/apyrimidinic) lyase activity and introduces nicks in the DNA strand. Cleaves the DNA backbone by beta-delta elimination to generate a single-strand break at the site of the removed base with both 3'- and 5'-phosphates. The chain is Formamidopyrimidine-DNA glycosylase from Photobacterium profundum (strain SS9).